The following is a 566-amino-acid chain: MAKLLSFSDDSRSALERGVNSLADAVRVTIGPRGRNVVLEKKFGAPDIVNDGVTIAKEIELDDPFENLGAKLIQQVASKTKDKAGDGTTTATVLAQAMVHEGLRNVAAGASPIELRRGMEKAVAQLVEELAQLSQSVGGNAIHQVATVSSGGDQEVGRMVSEAMDKVSADGVITVEESKSLATELEVTEGMAFDRGYSSPYFVTDADRQICEFENALLLLTDRKISSVSDLVPILESLQKSGSPLVIIAEEVEGEALATLVVNKNRGVLQVAAVRAPSFGDRRKAALADIAVLTGGTVISEDRAMTLEKVSQDDLGQVRRITISKDNTTIVAKDENRDAVNARVASIKRELDETDSEYDREKLNERIAKLAGGVAVIKVGAPTETELKNRKLRIEDALNATRAAVEEGIVAGGGTTLLHLSKGLSKLAEQLNDDQRTGVEIVQRALSAPARQIAINAGENGDVVISEIQRLNKGFNAISSTYEDLLEAGILDATKVVRLALQDAVSIASMMVTTELVIADKPEPPAPAGDGGGDPMGGMGGMGGMGGMGGMGGMGGMGGMGMPGMM.

Residues 29–32, 86–90, glycine 413, and aspartate 492 each bind ATP; these read TIGP and DGTTT. A disordered region spans residues 520-540; it reads DKPEPPAPAGDGGGDPMGGMG. The span at 529–540 shows a compositional bias: gly residues; that stretch reads GDGGGDPMGGMG.

This sequence belongs to the chaperonin (HSP60) family. Forms a cylinder of 14 subunits composed of two heptameric rings stacked back-to-back. Interacts with the co-chaperonin GroES.

It is found in the cytoplasm. It catalyses the reaction ATP + H2O + a folded polypeptide = ADP + phosphate + an unfolded polypeptide.. Functionally, together with its co-chaperonin GroES, plays an essential role in assisting protein folding. The GroEL-GroES system forms a nano-cage that allows encapsulation of the non-native substrate proteins and provides a physical environment optimized to promote and accelerate protein folding. This chain is Chaperonin GroEL 1, found in Prochlorococcus marinus (strain MIT 9313).